The following is a 216-amino-acid chain: Adenylate kinase (216 aa).

Position 10 to 15 (10 to 15) interacts with ATP; it reads GAGKGT. The segment at 30–59 is NMP; it reads STGDMLRAAVGVGTEVGKRAKAVMDAGKLV. AMP-binding positions include Thr-31, Arg-36, 57–59, 85–88, and Gln-92; these read KLV and GFPR. The segment at 126–163 is LID; that stretch reads GRYTCAQCGTVYHDTDKVPVEEGVCDKCGSTHFKRRPD. Residue Arg-127 participates in ATP binding. Zn(2+) is bound by residues Cys-130 and Cys-133. Residue 136 to 137 participates in ATP binding; sequence VY. Zn(2+)-binding residues include Cys-150 and Cys-153. Residues Arg-160 and Arg-172 each contribute to the AMP site. Residue Ala-200 participates in ATP binding.

Belongs to the adenylate kinase family. In terms of assembly, monomer.

The protein resides in the cytoplasm. It carries out the reaction AMP + ATP = 2 ADP. The protein operates within purine metabolism; AMP biosynthesis via salvage pathway; AMP from ADP: step 1/1. Its function is as follows. Catalyzes the reversible transfer of the terminal phosphate group between ATP and AMP. Plays an important role in cellular energy homeostasis and in adenine nucleotide metabolism. The chain is Adenylate kinase from Rhizobium etli (strain CIAT 652).